Consider the following 236-residue polypeptide: Ribose-5-phosphate isomerase A (236 aa).

Residues 29–32 (SGST), 86–89 (DGAD), and 99–102 (KGGG) contribute to the substrate site. The Proton acceptor role is filled by Glu108. Position 126 (Lys126) interacts with substrate.

The protein belongs to the ribose 5-phosphate isomerase family. In terms of assembly, homodimer.

It carries out the reaction aldehydo-D-ribose 5-phosphate = D-ribulose 5-phosphate. It participates in carbohydrate degradation; pentose phosphate pathway; D-ribose 5-phosphate from D-ribulose 5-phosphate (non-oxidative stage): step 1/1. Catalyzes the reversible conversion of ribose-5-phosphate to ribulose 5-phosphate. This is Ribose-5-phosphate isomerase A from Prochlorococcus marinus (strain NATL1A).